A 170-amino-acid polypeptide reads, in one-letter code: Negative modulator of initiation of replication (170 aa).

Residues 139–145 are interaction with DNA; that stretch reads NTNTGRK.

Belongs to the SeqA family. Homodimer. Polymerizes to form helical filaments.

The protein localises to the cytoplasm. Negative regulator of replication initiation, which contributes to regulation of DNA replication and ensures that replication initiation occurs exactly once per chromosome per cell cycle. Binds to pairs of hemimethylated GATC sequences in the oriC region, thus preventing assembly of replication proteins and re-initiation at newly replicated origins. Repression is relieved when the region becomes fully methylated. This chain is Negative modulator of initiation of replication, found in Tolumonas auensis (strain DSM 9187 / NBRC 110442 / TA 4).